A 49-amino-acid chain; its full sequence is Defensin-like protein 1 (49 aa).

4 disulfide bridges follow: C3–C49, C14–C35, C20–C43, and C24–C45.

It belongs to the DEFL family.

Its subcellular location is the secreted. Functionally, possesses antimicrobial activity sensitive to inorganic cations. Binds specifically to the fungal plasma membrane. Has no inhibitory effect on insect gut alpha-amylase. The sequence is that of Defensin-like protein 1 from Clitoria ternatea (Butterfly pea).